A 357-amino-acid chain; its full sequence is Protein RecA (357 aa).

73–80 (GPESSGKT) lines the ATP pocket.

The protein belongs to the RecA family.

It localises to the cytoplasm. Functionally, can catalyze the hydrolysis of ATP in the presence of single-stranded DNA, the ATP-dependent uptake of single-stranded DNA by duplex DNA, and the ATP-dependent hybridization of homologous single-stranded DNAs. It interacts with LexA causing its activation and leading to its autocatalytic cleavage. In Nitratidesulfovibrio vulgaris (strain ATCC 29579 / DSM 644 / CCUG 34227 / NCIMB 8303 / VKM B-1760 / Hildenborough) (Desulfovibrio vulgaris), this protein is Protein RecA.